The sequence spans 376 residues: Arsenite methyltransferase (376 aa).

Phosphoserine occurs at positions 47 and 336. Residues 354–363 (SDKMKPRHAP) show a composition bias toward basic and acidic residues. Residues 354–376 (SDKMKPRHAPEGTGGCCGKRKNC) form a disordered region.

Belongs to the methyltransferase superfamily. Arsenite methyltransferase family.

It localises to the cytoplasm. It is found in the cytosol. It carries out the reaction arsenic triglutathione + [thioredoxin]-dithiol + S-adenosyl-L-methionine + 2 H2O = methylarsonous acid + [thioredoxin]-disulfide + 3 glutathione + S-adenosyl-L-homocysteine + H(+). The catalysed reaction is arsenic triglutathione + 2 [thioredoxin]-dithiol + 2 S-adenosyl-L-methionine + H2O = dimethylarsinous acid + 2 [thioredoxin]-disulfide + 3 glutathione + 2 S-adenosyl-L-homocysteine + 2 H(+). It catalyses the reaction arsenic triglutathione + 3 [thioredoxin]-dithiol + 3 S-adenosyl-L-methionine = trimethylarsine + 3 [thioredoxin]-disulfide + 3 glutathione + 3 S-adenosyl-L-homocysteine + 3 H(+). Its function is as follows. Catalyzes the transfer of a methyl group from AdoMet to trivalent arsenicals producing methylated and dimethylated arsenicals. It methylates arsenite to form methylarsonate, Me-AsO(3)H(2), which is reduced by methylarsonate reductase to methylarsonite, Me-As(OH)2. Methylarsonite is also a substrate and it is converted into the much less toxic compound dimethylarsinate (cacodylate), Me(2)As(O)-OH. This chain is Arsenite methyltransferase (As3mt), found in Mus musculus (Mouse).